The chain runs to 154 residues: MNCPFCSHNDSKVIDSRPTDEGQAIRRRRECISCSKRFTTYEKIDEIPLIVVKKNGNREPYNRNKILNGVIRSCEKRPVSMKDIENLVDGIEKQIHNTMEREITTELIGNLVIDKIKDLDGVAYVRFASVYREFKDINTFMDEVKKILSEKPSL.

A zinc finger spans residues 3–34; that stretch reads CPFCSHNDSKVIDSRPTDEGQAIRRRRECISC. One can recognise an ATP-cone domain in the interval 49–139; it reads LIVVKKNGNR…VYREFKDINT (91 aa).

This sequence belongs to the NrdR family. The cofactor is Zn(2+).

Functionally, negatively regulates transcription of bacterial ribonucleotide reductase nrd genes and operons by binding to NrdR-boxes. The polypeptide is Transcriptional repressor NrdR (Alkaliphilus oremlandii (strain OhILAs) (Clostridium oremlandii (strain OhILAs))).